Reading from the N-terminus, the 416-residue chain is Glutamyl-tRNA reductase (416 aa).

Residues 49–52 (TCNR), Ser-105, 110–112 (EPQ), and Gln-116 each bind substrate. The active-site Nucleophile is Cys-50. Residue 185 to 190 (GAGETI) coordinates NADP(+).

This sequence belongs to the glutamyl-tRNA reductase family. As to quaternary structure, homodimer.

It carries out the reaction (S)-4-amino-5-oxopentanoate + tRNA(Glu) + NADP(+) = L-glutamyl-tRNA(Glu) + NADPH + H(+). It functions in the pathway porphyrin-containing compound metabolism; protoporphyrin-IX biosynthesis; 5-aminolevulinate from L-glutamyl-tRNA(Glu): step 1/2. In terms of biological role, catalyzes the NADPH-dependent reduction of glutamyl-tRNA(Glu) to glutamate 1-semialdehyde (GSA). This Shewanella baltica (strain OS185) protein is Glutamyl-tRNA reductase.